A 489-amino-acid chain; its full sequence is MLPVVALVGRPNVGKSTLFNRLTRTRDALVADFPGLTRDRKYGQAKIDEHEFIVIDTGGITGDEEGIDALMAGQSLLAIDEADAVLFLVDARAGMTIADEAIADHLRKQDKKVFVVANKTDGVDADSVCAEFYALGLGEVYHIAAAQGKGVRQMIEIALDGFFDDVEQEDDFSDLETGLEFVEEDEALLLKEQERLAALPIKLALIGRPNVGKSTLTNRILGEERVLVYDLPGTTRDSIYIPMSRDDREYILIDTAGVRKRKKVNETVEKFSVIKTLQAIEDCNVVLLIIDARDGISDQDLSLLGFTLNAGRSLVIAVNKWDGMTEYDKERVKSELDRRLGFIDFAKIHFISALHGTGVGHLYESVEEAYDSSTKRISTSILTRIMTMAAADHEPPMVGSRRVKLRYAHAGGYNPPLIVIHGNQVKKLADSYKRYLMNYFRRSLGIMGTPIRIEFREGTNPFAGRRNKLTPNQMYKRQRLVKFHKKSKK.

EngA-type G domains are found at residues 3–166 and 201–374; these read PVVA…FDDV and IKLA…DSST. GTP is bound by residues 9-16, 56-60, 118-121, 207-214, 254-258, and 319-322; these read GRPNVGKS, DTGGI, NKTD, DTAGV, and NKWD. The KH-like domain occupies 375 to 459; sequence KRISTSILTR…PIRIEFREGT (85 aa).

Belongs to the TRAFAC class TrmE-Era-EngA-EngB-Septin-like GTPase superfamily. EngA (Der) GTPase family. In terms of assembly, associates with the 50S ribosomal subunit.

Its function is as follows. GTPase that plays an essential role in the late steps of ribosome biogenesis. The protein is GTPase Der of Psychromonas ingrahamii (strain DSM 17664 / CCUG 51855 / 37).